The chain runs to 431 residues: Divergent protein kinase domain 1B (431 aa).

Residues 1-30 lie on the Cytoplasmic side of the membrane; the sequence is MRRLRRLAHLVLFCPFSKRLQGRLPGLRVR. The May mediate ER retention motif lies at 5–6; it reads RR. Residues 31–51 traverse the membrane as a helical segment; the sequence is CIFLAWLGVFAGSWLVYVHYS. The Lumenal portion of the chain corresponds to 52-431; that stretch reads SYSERCRGHV…WKKISNTKYS (380 aa). 2 disulfides stabilise this stretch: C57–C94 and C62–C117.

Belongs to the DIPK family. In terms of processing, among the many cysteines in the lumenal domain, most are probably involved in disulfide bonds.

Its subcellular location is the endoplasmic reticulum membrane. The polypeptide is Divergent protein kinase domain 1B (Homo sapiens (Human)).